The sequence spans 713 residues: Polyribonucleotide nucleotidyltransferase (713 aa).

Residues Asp-491 and Asp-497 each coordinate Mg(2+). Residues Pro-558 to Ile-617 enclose the KH domain. Residues Gly-627–Lys-695 form the S1 motif domain.

It belongs to the polyribonucleotide nucleotidyltransferase family. The cofactor is Mg(2+).

Its subcellular location is the cytoplasm. It carries out the reaction RNA(n+1) + phosphate = RNA(n) + a ribonucleoside 5'-diphosphate. In terms of biological role, involved in mRNA degradation. Catalyzes the phosphorolysis of single-stranded polyribonucleotides processively in the 3'- to 5'-direction. This is Polyribonucleotide nucleotidyltransferase from Burkholderia cenocepacia (strain ATCC BAA-245 / DSM 16553 / LMG 16656 / NCTC 13227 / J2315 / CF5610) (Burkholderia cepacia (strain J2315)).